The chain runs to 332 residues: Ribosomal RNA small subunit methyltransferase H (332 aa).

S-adenosyl-L-methionine contacts are provided by residues 36-38, aspartate 61, phenylalanine 88, aspartate 114, and glutamine 121; that span reads GGH.

Belongs to the methyltransferase superfamily. RsmH family.

The protein resides in the cytoplasm. The catalysed reaction is cytidine(1402) in 16S rRNA + S-adenosyl-L-methionine = N(4)-methylcytidine(1402) in 16S rRNA + S-adenosyl-L-homocysteine + H(+). Functionally, specifically methylates the N4 position of cytidine in position 1402 (C1402) of 16S rRNA. The sequence is that of Ribosomal RNA small subunit methyltransferase H from Pelodictyon phaeoclathratiforme (strain DSM 5477 / BU-1).